Here is a 236-residue protein sequence, read N- to C-terminus: Chaperone protein TorD (236 aa).

This sequence belongs to the TorD/DmsD family. TorD subfamily.

Its subcellular location is the cytoplasm. Its function is as follows. Involved in the biogenesis of TorA. Acts on TorA before the insertion of the molybdenum cofactor and, as a result, probably favors a conformation of the apoenzyme that is competent for acquiring the cofactor. The protein is Chaperone protein TorD of Colwellia psychrerythraea (strain 34H / ATCC BAA-681) (Vibrio psychroerythus).